Consider the following 342-residue polypeptide: Anthranilate phosphoribosyltransferase (342 aa).

Residues G83, 86–87 (GD), T91, 93–96 (NIST), 111–119 (KHGGRSVSS), and A123 contribute to the 5-phospho-alpha-D-ribose 1-diphosphate site. G83 lines the anthranilate pocket. Position 95 (S95) interacts with Mg(2+). R169 contributes to the anthranilate binding site. Mg(2+) is bound by residues D228 and E229.

The protein belongs to the anthranilate phosphoribosyltransferase family. As to quaternary structure, homodimer. It depends on Mg(2+) as a cofactor.

It catalyses the reaction N-(5-phospho-beta-D-ribosyl)anthranilate + diphosphate = 5-phospho-alpha-D-ribose 1-diphosphate + anthranilate. Its pathway is amino-acid biosynthesis; L-tryptophan biosynthesis; L-tryptophan from chorismate: step 2/5. In terms of biological role, catalyzes the transfer of the phosphoribosyl group of 5-phosphorylribose-1-pyrophosphate (PRPP) to anthranilate to yield N-(5'-phosphoribosyl)-anthranilate (PRA). The protein is Anthranilate phosphoribosyltransferase of Neisseria gonorrhoeae (strain ATCC 700825 / FA 1090).